A 431-amino-acid polypeptide reads, in one-letter code: UDP-N-acetylmuramoylalanine--D-glutamate ligase (431 aa).

111–117 (GTDGKST) serves as a coordination point for ATP.

This sequence belongs to the MurCDEF family.

The protein localises to the cytoplasm. The catalysed reaction is UDP-N-acetyl-alpha-D-muramoyl-L-alanine + D-glutamate + ATP = UDP-N-acetyl-alpha-D-muramoyl-L-alanyl-D-glutamate + ADP + phosphate + H(+). The protein operates within cell wall biogenesis; peptidoglycan biosynthesis. Cell wall formation. Catalyzes the addition of glutamate to the nucleotide precursor UDP-N-acetylmuramoyl-L-alanine (UMA). This is UDP-N-acetylmuramoylalanine--D-glutamate ligase from Petrotoga mobilis (strain DSM 10674 / SJ95).